We begin with the raw amino-acid sequence, 503 residues long: Probable DNA ligase (503 aa).

Glu-210 contributes to the ATP binding site. The active-site N6-AMP-lysine intermediate is the Lys-212. Residues Arg-217, Arg-232, Glu-261, Phe-296, Arg-367, and Lys-373 each coordinate ATP.

It belongs to the ATP-dependent DNA ligase family. It depends on Mg(2+) as a cofactor.

It catalyses the reaction ATP + (deoxyribonucleotide)n-3'-hydroxyl + 5'-phospho-(deoxyribonucleotide)m = (deoxyribonucleotide)n+m + AMP + diphosphate.. Functionally, DNA ligase that seals nicks in double-stranded DNA during DNA replication, DNA recombination and DNA repair. This is Probable DNA ligase from Rhodococcus jostii (strain RHA1).